A 131-amino-acid polypeptide reads, in one-letter code: MKKTILINSRLSEVIASMGHTDTIAIADSGLPIPKGVERIDLALTRDIPRFLDTLRVILSELCVEEAIIATEMKEKSPETYAELLKILGNIPIKEVSHEELKVMTKECVAVVRTGEYTPYCNIILRSGVVF.

Histidine 20 acts as the Proton donor in catalysis. Substrate is bound by residues aspartate 28, histidine 98, and 120-122; that span reads YCN.

It belongs to the RbsD / FucU family. RbsD subfamily. Homodecamer.

It is found in the cytoplasm. The catalysed reaction is beta-D-ribopyranose = beta-D-ribofuranose. The protein operates within carbohydrate metabolism; D-ribose degradation; D-ribose 5-phosphate from beta-D-ribopyranose: step 1/2. Its function is as follows. Catalyzes the interconversion of beta-pyran and beta-furan forms of D-ribose. In Coprothermobacter proteolyticus (strain ATCC 35245 / DSM 5265 / OCM 4 / BT), this protein is D-ribose pyranase.